A 351-amino-acid polypeptide reads, in one-letter code: D-glucoside 3-dehydrogenase (351 aa).

Belongs to the Gfo/Idh/MocA family.

The enzyme catalyses a D-glucoside + NAD(+) = a 3-dehydro-D-glucoside + NADH + H(+). Catalyzes the NADH-dependent reduction of the oxo group at C3 of 3-dehydro-D-glucosides leading to D-glucosides. Probably functions in a metabolic pathway that transforms D-gulosides to D-glucosides. Can use 3-dehydro-D-glucose, methyl alpha-3-dehydro-D-glucoside and methyl beta-3-dehydro-D-glucoside as substrates in vitro. However, the actual specific physiological substrates for this metabolic pathway are unknown. To a lesser extent, is also able to catalyze the reverse reactions, i.e. the NAD(+)-dependent oxidation of the hydroxyl group at C3 of D-glucosides leading to 3-dehydro-D-glucosides. Cannot act on UDP-glucose, UDP-N-acetyl-D-glucosamine, D-glucosamine, N-acetyl-D-glucosamine, or UDP-D-galactose. The protein is D-glucoside 3-dehydrogenase (ycjS) of Escherichia coli (strain K12).